A 395-amino-acid polypeptide reads, in one-letter code: tRNA (guanine-N(7)-)-methyltransferase (395 aa).

Glu126, Glu151, and Asp178 together coordinate S-adenosyl-L-methionine. Substrate is bound by residues Lys204 and Asp234.

Belongs to the class I-like SAM-binding methyltransferase superfamily. TrmB family.

The enzyme catalyses guanosine(46) in tRNA + S-adenosyl-L-methionine = N(7)-methylguanosine(46) in tRNA + S-adenosyl-L-homocysteine. It functions in the pathway tRNA modification; N(7)-methylguanine-tRNA biosynthesis. Functionally, catalyzes the formation of N(7)-methylguanine at position 46 (m7G46) in tRNA. In Campylobacter fetus subsp. fetus (strain 82-40), this protein is tRNA (guanine-N(7)-)-methyltransferase.